We begin with the raw amino-acid sequence, 353 residues long: MPGNSIGKIFKVTTCGESHGPMLAGIIDGVPPGLSLNNKDIQYELNRRRPGFSKFTSQRREKDKVEIFSGIFKGITTGTSIGIRIKNIDIRSQDYSEIKNLYRPNHADYTYEKKYGIRDYRGGGRSSARETAIRVAAGAIAKKYLKLQHNIKIRGYLSQIGSIYCPFQSWEEVEKNPFFCSNSEKIKKIIHFIKKLKKSGNSVGAKITIIAKNVPIGLGEPVFDRLNAEIAHSIMSINAAKSIEIGDGIHVAKQTGVEHRDEILPNGFSSNHSGGILGGISNGEEIIVHAAFKPTSSIKIPGKTIDTFGKKRFIITKGRHDPCVGIRAVPIAEAMLAITLMDHVLRFKAQCGK.

Residue arginine 48 coordinates NADP(+). Residues 125–127 (RSS), 238–239 (NA), glycine 278, 293–297 (KPTSS), and arginine 319 contribute to the FMN site.

It belongs to the chorismate synthase family. As to quaternary structure, homotetramer. FMNH2 serves as cofactor.

The catalysed reaction is 5-O-(1-carboxyvinyl)-3-phosphoshikimate = chorismate + phosphate. It functions in the pathway metabolic intermediate biosynthesis; chorismate biosynthesis; chorismate from D-erythrose 4-phosphate and phosphoenolpyruvate: step 7/7. In terms of biological role, catalyzes the anti-1,4-elimination of the C-3 phosphate and the C-6 proR hydrogen from 5-enolpyruvylshikimate-3-phosphate (EPSP) to yield chorismate, which is the branch point compound that serves as the starting substrate for the three terminal pathways of aromatic amino acid biosynthesis. This reaction introduces a second double bond into the aromatic ring system. The protein is Chorismate synthase of Buchnera aphidicola subsp. Cinara cedri (strain Cc).